We begin with the raw amino-acid sequence, 186 residues long: Outer-membrane lipoprotein LolB (186 aa).

A signal peptide spans 1–16; the sequence is MRRLAVIASLAWALGG. A lipid anchor (N-palmitoyl cysteine) is attached at cysteine 17. Cysteine 17 is lipidated: S-diacylglycerol cysteine.

Belongs to the LolB family. In terms of assembly, monomer.

The protein resides in the cell outer membrane. Its function is as follows. Plays a critical role in the incorporation of lipoproteins in the outer membrane after they are released by the LolA protein. In Thiobacillus denitrificans (strain ATCC 25259 / T1), this protein is Outer-membrane lipoprotein LolB.